The sequence spans 325 residues: uncharacterized protein (325 aa).

A disordered region spans residues 1-75 (MSQPPEHPGN…PPPGYPTHLQ (75 aa)). A compositionally biased stretch (pro residues) spans 24–70 (YPPPGYGAPPPPPGYGPPPGTYLPPGYNAPPPPPGYGPPPGPPPPGY). 4 helical membrane-spanning segments follow: residues 96 to 116 (AVTLVVPVLAYAVALAAVIGA), 153 to 173 (IVMFLGYIALFALVLYMHAGI), 205 to 225 (LLIVALTFIGGLLCVIPGLIF), and 273 to 293 (LVGELLCFVGMLIGIPVAALI).

It to M.tuberculosis Rv2560.

The protein localises to the cell membrane. This is an uncharacterized protein from Mycobacterium bovis (strain ATCC BAA-935 / AF2122/97).